Consider the following 555-residue polypeptide: Synaptotagmin-14 (555 aa).

Over 1 to 24 the chain is Extracellular; it reads MAIEGGERTCGVHELICIRKVSPE. The chain crosses the membrane as a helical; Signal-anchor for type III membrane protein span at residues 25–47; that stretch reads AVGFLSAVGVFIILMLLLFLYIN. Topologically, residues 48 to 555 are cytoplasmic; the sequence is KKFCFENVGG…VCRWHALLES (508 aa). Disordered regions lie at residues 157–179 and 222–257; these read TPPL…HLSC and GYEE…DPEP. C2 domains are found at residues 260-379 and 415-550; these read KYGT…SLPV and SVPE…CRWH.

The protein belongs to the synaptotagmin family. In terms of assembly, homodimer. Can also form heterodimers. In terms of tissue distribution, highly expressed in fetal and adult brain tissue.

It localises to the membrane. In terms of biological role, may be involved in the trafficking and exocytosis of secretory vesicles in non-neuronal tissues. Is Ca(2+)-independent. In Homo sapiens (Human), this protein is Synaptotagmin-14 (SYT14).